A 98-amino-acid polypeptide reads, in one-letter code: MPRSLKKGPFIEFKLEKRILDMNSKGERKVVKTWSRSSMISPDFVGHTVAVHNGKTHVPVYVTENMVGHKLGEFAPTRLYRGHAGGKAEKGGSAPRKK.

The protein belongs to the universal ribosomal protein uS19 family.

Its function is as follows. Protein S19 forms a complex with S13 that binds strongly to the 16S ribosomal RNA. The protein is Small ribosomal subunit protein uS19 of Chlorobaculum parvum (strain DSM 263 / NCIMB 8327) (Chlorobium vibrioforme subsp. thiosulfatophilum).